The chain runs to 320 residues: Ferrochelatase (320 aa).

Fe cation-binding residues include His194 and Glu275.

It belongs to the ferrochelatase family. In terms of assembly, monomer.

The protein localises to the cytoplasm. It carries out the reaction heme b + 2 H(+) = protoporphyrin IX + Fe(2+). It participates in porphyrin-containing compound metabolism; protoheme biosynthesis; protoheme from protoporphyrin-IX: step 1/1. Functionally, catalyzes the ferrous insertion into protoporphyrin IX. The protein is Ferrochelatase of Salmonella arizonae (strain ATCC BAA-731 / CDC346-86 / RSK2980).